The primary structure comprises 412 residues: Exodeoxyribonuclease 7 large subunit (412 aa).

Belongs to the XseA family. As to quaternary structure, heterooligomer composed of large and small subunits.

The protein localises to the cytoplasm. It carries out the reaction Exonucleolytic cleavage in either 5'- to 3'- or 3'- to 5'-direction to yield nucleoside 5'-phosphates.. Functionally, bidirectionally degrades single-stranded DNA into large acid-insoluble oligonucleotides, which are then degraded further into small acid-soluble oligonucleotides. The sequence is that of Exodeoxyribonuclease 7 large subunit from Nostoc sp. (strain PCC 7120 / SAG 25.82 / UTEX 2576).